Reading from the N-terminus, the 367-residue chain is MLLSLVRCSTKRQWAISSTGIRLLSISSPFLSTGSSNSDFLMNLSGSTRSSKHNNLHNNDRTPINKYKSNHGPKKVHSNYQLETKIQPKKMHQSTKFKKFSIKWTTGSERAQKAANEVFQKILGLSPNGVIKALNLETNEIETSSIFQFAKGIDLDRHGFIIANVERTTDHKKIPLVKLIEARVALRRYSDKVADRKQKELIDLGVIKSSKKYDNEKEKVGIKHIRVSWKIKETDLAKQKTNEIQSALKKGHKLCIYLDDKTRTNTDWVDDFTIPAENSNKKISKREKLNRTAILDAVKSLLEEEDTFLSFEGNIENRMLIKSTPKTLSTSKNKEALDEKKVLKEQKKQERREKLRLRTEKKQDTVT.

Residues 1–31 (MLLSLVRCSTKRQWAISSTGIRLLSISSPFL) constitute a mitochondrion transit peptide. Residues 326-367 (KTLSTSKNKEALDEKKVLKEQKKQERREKLRLRTEKKQDTVT) form a disordered region. The segment covering 332 to 367 (KNKEALDEKKVLKEQKKQERREKLRLRTEKKQDTVT) has biased composition (basic and acidic residues).

This sequence belongs to the AIM23 family.

It is found in the mitochondrion. The polypeptide is Altered inheritance of mitochondria protein 23, mitochondrial (AIM23) (Vanderwaltozyma polyspora (strain ATCC 22028 / DSM 70294 / BCRC 21397 / CBS 2163 / NBRC 10782 / NRRL Y-8283 / UCD 57-17) (Kluyveromyces polysporus)).